Reading from the N-terminus, the 228-residue chain is Cytochrome c oxidase subunit 2 (228 aa).

The Mitochondrial intermembrane portion of the chain corresponds to 1–26; the sequence is MSQWFQLGLQNGNSPLMEQLIFFHDH. A helical transmembrane segment spans residues 27-48; sequence ALLVVILITSLVGFFLAALFSN. Over 49–62 the chain is Mitochondrial matrix; it reads KFLHRYLLDGQAIE. The helical transmembrane segment at 63–82 threads the bilayer; that stretch reads TVWTVIPAIILVAIALPSIR. Topologically, residues 83–228 are mitochondrial intermembrane; the sequence is LLYLIDEIHN…FLKWLELQIS (146 aa). Cu cation is bound by residues His-161, Cys-196, Glu-198, Cys-200, His-204, and Met-207. Mg(2+) is bound at residue Glu-198.

The protein belongs to the cytochrome c oxidase subunit 2 family. As to quaternary structure, component of the cytochrome c oxidase (complex IV, CIV), a multisubunit enzyme composed of a catalytic core of 3 subunits and several supernumerary subunits. The complex exists as a monomer or a dimer and forms supercomplexes (SCs) in the inner mitochondrial membrane with ubiquinol-cytochrome c oxidoreductase (cytochrome b-c1 complex, complex III, CIII). The cofactor is Cu cation.

The protein resides in the mitochondrion inner membrane. It catalyses the reaction 4 Fe(II)-[cytochrome c] + O2 + 8 H(+)(in) = 4 Fe(III)-[cytochrome c] + 2 H2O + 4 H(+)(out). Component of the cytochrome c oxidase, the last enzyme in the mitochondrial electron transport chain which drives oxidative phosphorylation. The respiratory chain contains 3 multisubunit complexes succinate dehydrogenase (complex II, CII), ubiquinol-cytochrome c oxidoreductase (cytochrome b-c1 complex, complex III, CIII) and cytochrome c oxidase (complex IV, CIV), that cooperate to transfer electrons derived from NADH and succinate to molecular oxygen, creating an electrochemical gradient over the inner membrane that drives transmembrane transport and the ATP synthase. Cytochrome c oxidase is the component of the respiratory chain that catalyzes the reduction of oxygen to water. Electrons originating from reduced cytochrome c in the intermembrane space (IMS) are transferred via the dinuclear copper A center (CU(A)) of subunit 2 and heme A of subunit 1 to the active site in subunit 1, a binuclear center (BNC) formed by heme A3 and copper B (CU(B)). The BNC reduces molecular oxygen to 2 water molecules using 4 electrons from cytochrome c in the IMS and 4 protons from the mitochondrial matrix. The chain is Cytochrome c oxidase subunit 2 (COII) from Artemia franciscana (Brine shrimp).